The sequence spans 279 residues: Proteasome subunit beta (279 aa).

The propeptide at 1–53 (MAAAFDPSGRLPDLFTSAGTSSFSAFLSMAAPELLPGRRPLPPGTAADLTPHA) is removed in mature form; by autocatalysis. Thr-54 acts as the Nucleophile in catalysis.

This sequence belongs to the peptidase T1B family. As to quaternary structure, the 20S proteasome core is composed of 14 alpha and 14 beta subunits that assemble into four stacked heptameric rings, resulting in a barrel-shaped structure. The two inner rings, each composed of seven catalytic beta subunits, are sandwiched by two outer rings, each composed of seven alpha subunits. The catalytic chamber with the active sites is on the inside of the barrel. Has a gated structure, the ends of the cylinder being occluded by the N-termini of the alpha-subunits. Is capped by the proteasome-associated ATPase, ARC.

The protein resides in the cytoplasm. The catalysed reaction is Cleavage of peptide bonds with very broad specificity.. Its pathway is protein degradation; proteasomal Pup-dependent pathway. With respect to regulation, the formation of the proteasomal ATPase ARC-20S proteasome complex, likely via the docking of the C-termini of ARC into the intersubunit pockets in the alpha-rings, may trigger opening of the gate for substrate entry. Interconversion between the open-gate and close-gate conformations leads to a dynamic regulation of the 20S proteasome proteolysis activity. Functionally, component of the proteasome core, a large protease complex with broad specificity involved in protein degradation. This Salinispora arenicola (strain CNS-205) protein is Proteasome subunit beta.